An 831-amino-acid polypeptide reads, in one-letter code: MTVSPSALAELGFNYQEEDSVRPWAAVLVDLPQNEGVYTYAIPPGLTVQDGDIVAVPFGNQQLGGIVVGCLTKLPPDLPPEKIKPIQDVIVSGFFAPHYWRLLHWLAEYYCTELITVIRMALPPGLLQRSQRRIKLNGDRLPSDWPLFLSQPSHQGARQILTLLQSSKEGDYSYRYLRQKVPGLTKALRDLLKRQWVESYLEPPKAVQPQLPKMVTLLNFDPSFKLTELQARTLIVLKNQGGEMWLADLLKAVPCSASTIQSLAKKGLVAIAEREKLRLFQQPSINASQAPELTPAQKQACQTVLPLQGYHQVLLHGVTGSGKTEVYLQICGDRLGKGQSVLVLVPEIGLTPQLTDRFRARFGNKVAVYHSGLSSGEKYDTWRQTLLGHEQIVIGTRSAIFTPLPNLGLIILDEEHDSSFKQTQLTPNYHARTVAQRRAELEQCPLILGSATPSLESWHTVHRHQNDPQRHYLELPERVQSRPLPPVQIVDMRAELKQGNRSIFSRALQTALGELKAKQQQGILFINRRGHSTFVSCRSCGYVLECPNCDVSLSYHYVQGNGQPLLRCHYCNHAEIQPKVCPECSSPYLKFFGSGTQKVTEALTQEFPDLRWIRFDSDTTRRKGAHRALLDQFQRGEADLLVGTQMLTKGLDLAQITLVGVVAADSLLNFADYRSAERGFQTLTQVSGRAGRGEEPGQVIIQTYTPRHPVIQAVKTHNYHGFIAQELPQREMLNYPPYGKLILLRCLGTNEREVEKTIQAIAVLCEQLLPKTVEILGPAPASILRIAQRYRWQLLVKYPSFIKVILPLERIKQICPSSVYLDIDVDPLSID.

The Helicase ATP-binding domain maps to 304–471 (VLPLQGYHQV…HRHQNDPQRH (168 aa)). An ATP-binding site is contributed by 317-324 (GVTGSGKT). The DEAH box signature appears at 413–416 (DEEH). Zn(2+) is bound by residues Cys537, Cys540, Cys546, Cys549, Cys568, Cys571, Cys581, and Cys584. The region spanning 575–735 (EIQPKVCPEC…ELPQREMLNY (161 aa)) is the Helicase C-terminal domain.

This sequence belongs to the helicase family. PriA subfamily. Component of the replication restart primosome. The cofactor is Zn(2+).

It catalyses the reaction Couples ATP hydrolysis with the unwinding of duplex DNA by translocating in the 3'-5' direction.. It carries out the reaction ATP + H2O = ADP + phosphate + H(+). Initiates the restart of stalled replication forks, which reloads the replicative helicase on sites other than the origin of replication. Recognizes and binds to abandoned replication forks and remodels them to uncover a helicase loading site. Promotes assembly of the primosome at these replication forks. The polypeptide is Replication restart protein PriA (Synechocystis sp. (strain ATCC 27184 / PCC 6803 / Kazusa)).